The primary structure comprises 2924 residues: Zinc finger ZZ-type and EF-hand domain-containing protein 1 (2924 aa).

The disordered stretch occupies residues 1 to 41 (MGNAPSNSSEDEAAAAGGEGWSPHQDWAADSGTTPGPGPAA). Gly2 carries N-myristoyl glycine lipidation. Residues 28–41 (AADSGTTPGPGPAA) show a composition bias toward low complexity. Positions 111–146 (CSGEQFEEAFAQFDAEGDGTVDAENMLEALKNSSGA) constitute an EF-hand domain. In terms of domain architecture, DOC spans 226–405 (LVQKEKESPG…AIWYWSLLTS (180 aa)). Ser240 carries the post-translational modification Phosphoserine. The span at 1452–1470 (HLQPLDRRQRTSSVVEEHF) shows a compositional bias: basic and acidic residues. A disordered region spans residues 1452-1527 (HLQPLDRRQR…STPTRRPPFT (76 aa)). Over residues 1472-1485 (GSASPTEAATPAAG) the composition is skewed to low complexity. A phosphoserine mark is found at Ser1475, Ser1488, and Ser1509. Thr1510 is modified (phosphothreonine). The span at 1514 to 1523 (PSPPSTPTRR) shows a compositional bias: pro residues. Phosphoserine is present on Ser1515. 2 positions are modified to phosphothreonine: Thr1519 and Thr1521. Residues Ser1535 and Ser1538 each carry the phosphoserine modification. 2 ZZ-type zinc fingers span residues 1776-1831 (NVDI…FTCD) and 1825-1880 (NMEF…MVTI). The Zn(2+) site is built by Cys1781, Cys1784, Cys1795, Cys1798, Cys1804, Cys1807, His1817, His1821, Cys1830, Cys1833, Cys1844, Cys1847, Cys1853, Cys1856, His1866, and His1870. Positions 2388 to 2418 (DLELDERGDQEEELDRPVSSPGEAEQKKLDP) are disordered. Ser2407 is modified (phosphoserine). Lys2630 bears the N6-acetyllysine mark.

In terms of assembly, interacts with KLF6 and KLF9. Interacts via (ZZ-type 2 zinc finger) with histone H3 trimethylated at 'Lys-4' (H3K4me3) and histone H3 acetylated at 'Lys-4' (H3K4ac).

In terms of biological role, histone H3 reader which may act as a transcriptional coactivator for KLF6 and KLF9 transcription factors. In Mus musculus (Mouse), this protein is Zinc finger ZZ-type and EF-hand domain-containing protein 1 (Zzef1).